The primary structure comprises 490 residues: Cytochrome P450 90D2 (490 aa).

A helical transmembrane segment spans residues 4–24 (AAAGWAAPAFAVAAVVIWVVL). Residue cysteine 437 participates in heme binding.

This sequence belongs to the cytochrome P450 family. Heme serves as cofactor.

It is found in the membrane. The catalysed reaction is 6-deoxoteasterone + reduced [NADPH--hemoprotein reductase] + O2 = 3-dehydro-6-deoxoteasterone + oxidized [NADPH--hemoprotein reductase] + 2 H2O + H(+). Its pathway is plant hormone biosynthesis; brassinosteroid biosynthesis. Catalyzes the C6-oxidation step in brassinosteroids biosynthesis. May convert 6-deoxoteasterone (6-deoxoTE) to 3-dehydro-6-deoxoteasterone (6-deoxo3DT, 6-deoxo3DHT), and teasterone (TE) to 3-dehydroteasterone (3DT, 3-DHT). Involved in the elongation of leaf sheaths and stems. The protein is Cytochrome P450 90D2 of Oryza sativa subsp. indica (Rice).